Consider the following 429-residue polypeptide: Adenylosuccinate synthetase (429 aa).

GTP is bound by residues 12–18 (GDEGKGK) and 40–42 (GHT). The active-site Proton acceptor is Asp13. Residues Asp13 and Gly40 each coordinate Mg(2+). Residues 13-16 (DEGK), 38-41 (NAGH), Thr128, Arg142, Gln223, Thr238, and Arg302 each bind IMP. His41 serves as the catalytic Proton donor. A substrate-binding site is contributed by 298–304 (TTTGRPR). GTP is bound by residues Arg304, 330–332 (SID), and 412–414 (SVG).

It belongs to the adenylosuccinate synthetase family. Homodimer. Requires Mg(2+) as cofactor.

Its subcellular location is the cytoplasm. The catalysed reaction is IMP + L-aspartate + GTP = N(6)-(1,2-dicarboxyethyl)-AMP + GDP + phosphate + 2 H(+). Its pathway is purine metabolism; AMP biosynthesis via de novo pathway; AMP from IMP: step 1/2. Plays an important role in the de novo pathway of purine nucleotide biosynthesis. Catalyzes the first committed step in the biosynthesis of AMP from IMP. The chain is Adenylosuccinate synthetase from Bacillus cereus (strain ZK / E33L).